Reading from the N-terminus, the 429-residue chain is Adenylosuccinate synthetase (429 aa).

GTP contacts are provided by residues 12 to 18 and 40 to 42; these read GDEGKGK and GHT. Asp-13 (proton acceptor) is an active-site residue. Mg(2+) is bound by residues Asp-13 and Gly-40. IMP-binding positions include 13-16, 38-41, Thr-127, Arg-141, Gln-222, Thr-237, and Arg-301; these read DEGK and NAGH. His-41 acts as the Proton donor in catalysis. Position 297 to 303 (297 to 303) interacts with substrate; that stretch reads ATTGRPR. GTP-binding positions include Arg-303, 329–331, and 411–413; these read KLD and SLG.

It belongs to the adenylosuccinate synthetase family. Homodimer. It depends on Mg(2+) as a cofactor.

Its subcellular location is the cytoplasm. The enzyme catalyses IMP + L-aspartate + GTP = N(6)-(1,2-dicarboxyethyl)-AMP + GDP + phosphate + 2 H(+). It functions in the pathway purine metabolism; AMP biosynthesis via de novo pathway; AMP from IMP: step 1/2. Its function is as follows. Plays an important role in the de novo pathway of purine nucleotide biosynthesis. Catalyzes the first committed step in the biosynthesis of AMP from IMP. The chain is Adenylosuccinate synthetase from Endomicrobium trichonymphae.